A 338-amino-acid chain; its full sequence is L-serine dehydratase (338 aa).

Residue Lys39 is modified to N6-(pyridoxal phosphate)lysine.

Belongs to the serine/threonine dehydratase family. Requires pyridoxal 5'-phosphate as cofactor.

Its subcellular location is the cytoplasm. The enzyme catalyses L-serine = pyruvate + NH4(+). It participates in carbohydrate biosynthesis; gluconeogenesis. The polypeptide is L-serine dehydratase (SDL1) (Saccharomyces cerevisiae (Baker's yeast)).